We begin with the raw amino-acid sequence, 198 residues long: Small ribosomal subunit protein uS11 (198 aa).

Low complexity-rich tracts occupy residues Met1–Pro11 and Glu19–Pro58. Disordered regions lie at residues Met1–Asp72 and Asp178–Val198. A compositionally biased stretch (basic residues) spans Thr187–Val198.

This sequence belongs to the universal ribosomal protein uS11 family. Part of the 30S ribosomal subunit.

In terms of biological role, located on the platform of the 30S subunit. This Cenarchaeum symbiosum (strain A) protein is Small ribosomal subunit protein uS11.